A 256-amino-acid chain; its full sequence is L-erythrulose-1-phosphate isomerase (256 aa).

The active-site Electrophile is H96. The active-site Proton acceptor is the E169. Substrate contacts are provided by G175 and S212.

Belongs to the triosephosphate isomerase family. As to quaternary structure, homodimer.

The protein resides in the cytoplasm. It carries out the reaction L-erythrulose 1-phosphate = D-erythrulose 4-phosphate. The protein operates within carbohydrate metabolism; erythritol degradation. Catalyzes the isomerization of D-erythrulose-4P to L-erythrulose-1P. The protein is L-erythrulose-1-phosphate isomerase of Brucella melitensis biotype 1 (strain ATCC 23456 / CCUG 17765 / NCTC 10094 / 16M).